The sequence spans 105 residues: Large ribosomal subunit protein eL30 (105 aa).

Residues K22, K53, and K83 each participate in a glycyl lysine isopeptide (Lys-Gly) (interchain with G-Cter in ubiquitin) cross-link.

Belongs to the eukaryotic ribosomal protein eL30 family. As to quaternary structure, component of the large ribosomal subunit (LSU). Mature yeast ribosomes consist of a small (40S) and a large (60S) subunit. The 40S small subunit contains 1 molecule of ribosomal RNA (18S rRNA) and 33 different proteins (encoded by 57 genes). The large 60S subunit contains 3 rRNA molecules (25S, 5.8S and 5S rRNA) and 46 different proteins (encoded by 81 genes).

It is found in the cytoplasm. In terms of biological role, component of the ribosome, a large ribonucleoprotein complex responsible for the synthesis of proteins in the cell. The small ribosomal subunit (SSU) binds messenger RNAs (mRNAs) and translates the encoded message by selecting cognate aminoacyl-transfer RNA (tRNA) molecules. The large subunit (LSU) contains the ribosomal catalytic site termed the peptidyl transferase center (PTC), which catalyzes the formation of peptide bonds, thereby polymerizing the amino acids delivered by tRNAs into a polypeptide chain. The nascent polypeptides leave the ribosome through a tunnel in the LSU and interact with protein factors that function in enzymatic processing, targeting, and the membrane insertion of nascent chains at the exit of the ribosomal tunnel. This Saccharomyces cerevisiae (strain ATCC 204508 / S288c) (Baker's yeast) protein is Large ribosomal subunit protein eL30.